The primary structure comprises 103 residues: MSHTILLVQPGRNPETRTYSDYESVNECMEGVCKIYEEHLKRRNPNTPTITYDISQLFDFVDQLADLSCLVYQKSTNTYAPYNKEWIKEKIYVLLRQAAGTTD.

Belongs to the E(R) family. In terms of assembly, homodimer.

Its function is as follows. May have a role in the cell cycle. The polypeptide is Enhancer of rudimentary homolog (Aedes aegypti (Yellowfever mosquito)).